A 140-amino-acid polypeptide reads, in one-letter code: Nucleoside diphosphate kinase (140 aa).

6 residues coordinate ATP: lysine 10, phenylalanine 58, arginine 86, threonine 92, arginine 103, and asparagine 113. Histidine 116 acts as the Pros-phosphohistidine intermediate in catalysis.

This sequence belongs to the NDK family. In terms of assembly, homotetramer. The cofactor is Mg(2+).

It is found in the cytoplasm. It catalyses the reaction a 2'-deoxyribonucleoside 5'-diphosphate + ATP = a 2'-deoxyribonucleoside 5'-triphosphate + ADP. The catalysed reaction is a ribonucleoside 5'-diphosphate + ATP = a ribonucleoside 5'-triphosphate + ADP. In terms of biological role, major role in the synthesis of nucleoside triphosphates other than ATP. The ATP gamma phosphate is transferred to the NDP beta phosphate via a ping-pong mechanism, using a phosphorylated active-site intermediate. In Haemophilus influenzae (strain PittEE), this protein is Nucleoside diphosphate kinase.